The primary structure comprises 517 residues: Crotonobetaine/carnitine--CoA ligase (517 aa).

This sequence belongs to the ATP-dependent AMP-binding enzyme family.

The enzyme catalyses 4-(trimethylamino)butanoate + ATP + CoA = 4-(trimethylamino)butanoyl-CoA + AMP + diphosphate. The catalysed reaction is crotonobetaine + ATP + CoA = crotonobetainyl-CoA + AMP + diphosphate. It carries out the reaction (R)-carnitine + ATP + CoA = (R)-carnitinyl-CoA + AMP + diphosphate. The protein operates within amine and polyamine metabolism; carnitine metabolism. Functionally, catalyzes the transfer of CoA to carnitine, generating the initial carnitinyl-CoA needed for the CaiB reaction cycle. Also has activity toward crotonobetaine and gamma-butyrobetaine. This is Crotonobetaine/carnitine--CoA ligase from Escherichia coli (strain ATCC 8739 / DSM 1576 / NBRC 3972 / NCIMB 8545 / WDCM 00012 / Crooks).